Consider the following 93-residue polypeptide: uncharacterized protein (93 aa).

Residues 25–68 are a coiled coil; it reads DIKKLSQVKSELEQGKALLEEEKKELIEKNSNLNLQISNMNHLK.

This is an uncharacterized protein from Dictyostelium discoideum (Social amoeba).